The sequence spans 270 residues: Thiazole synthase (270 aa).

Lys-111 acts as the Schiff-base intermediate with DXP in catalysis. 1-deoxy-D-xylulose 5-phosphate-binding positions include Gly-172, 198–199, and 220–221; these read AG and NS. The tract at residues 249-270 is disordered; the sequence is AGRLPTRAQASPSSPTTGKVND. Polar residues predominate over residues 256–270; that stretch reads AQASPSSPTTGKVND.

This sequence belongs to the ThiG family. Homotetramer. Forms heterodimers with either ThiH or ThiS.

It localises to the cytoplasm. The catalysed reaction is [ThiS sulfur-carrier protein]-C-terminal-Gly-aminoethanethioate + 2-iminoacetate + 1-deoxy-D-xylulose 5-phosphate = [ThiS sulfur-carrier protein]-C-terminal Gly-Gly + 2-[(2R,5Z)-2-carboxy-4-methylthiazol-5(2H)-ylidene]ethyl phosphate + 2 H2O + H(+). Its pathway is cofactor biosynthesis; thiamine diphosphate biosynthesis. Its function is as follows. Catalyzes the rearrangement of 1-deoxy-D-xylulose 5-phosphate (DXP) to produce the thiazole phosphate moiety of thiamine. Sulfur is provided by the thiocarboxylate moiety of the carrier protein ThiS. In vitro, sulfur can be provided by H(2)S. This is Thiazole synthase from Synechococcus sp. (strain WH7803).